The following is a 402-amino-acid chain: Phosphoglycerate kinase (402 aa).

Residues 24–26 (DFN), R40, 63–66 (HFGR), R122, and R155 contribute to the substrate site. ATP-binding positions include K206, G297, E328, and 357 to 360 (GGDS).

Belongs to the phosphoglycerate kinase family. In terms of assembly, monomer.

The protein resides in the cytoplasm. It catalyses the reaction (2R)-3-phosphoglycerate + ATP = (2R)-3-phospho-glyceroyl phosphate + ADP. It participates in carbohydrate degradation; glycolysis; pyruvate from D-glyceraldehyde 3-phosphate: step 2/5. The sequence is that of Phosphoglycerate kinase from Synechococcus elongatus (strain ATCC 33912 / PCC 7942 / FACHB-805) (Anacystis nidulans R2).